The sequence spans 834 residues: Ras GTPase-activating protein 3 (834 aa).

2 C2 domains span residues 1–112 (MAVE…DTWF) and 123–263 (VQGK…EAWY). N-acetylalanine is present on A2. Y66 is subject to Phosphotyrosine. The residue at position 77 (S77) is a Phosphoserine. T110 carries the phosphothreonine modification. One can recognise a Ras-GAP domain in the interval 346 to 561 (GRVVPFISAI…DAVKNFLDLI (216 aa)). Positions 576-677 (ILLKEGFMIK…WIDILTKVSQ (102 aa)) constitute a PH domain. Residues 679-715 (NQKRLAVYHPSAYLNGHWLCCRASSDTAAGCSPCTGG) form a Btk-type zinc finger. H687, C698, C699, and C709 together coordinate Zn(2+). The disordered stretch occupies residues 806–834 (KYGSQEHPIGDKSFQSYIRQQSETPAHSM). S809 and S833 each carry phosphoserine. Polar residues predominate over residues 818-834 (SFQSYIRQQSETPAHSM).

Inhibitory regulator of the Ras-cyclic AMP pathway. May bind inositol tetrakisphosphate (IP4). In Bos taurus (Bovine), this protein is Ras GTPase-activating protein 3 (RASA3).